The primary structure comprises 424 residues: Serine hydroxymethyltransferase 2 (424 aa).

Residues Leu125 and 129–131 (GHL) each bind (6S)-5,6,7,8-tetrahydrofolate. Lys234 is modified (N6-(pyridoxal phosphate)lysine). Glu250 lines the (6S)-5,6,7,8-tetrahydrofolate pocket.

This sequence belongs to the SHMT family. Homodimer. It depends on pyridoxal 5'-phosphate as a cofactor.

It is found in the cytoplasm. The catalysed reaction is (6R)-5,10-methylene-5,6,7,8-tetrahydrofolate + glycine + H2O = (6S)-5,6,7,8-tetrahydrofolate + L-serine. The protein operates within one-carbon metabolism; tetrahydrofolate interconversion. Its pathway is amino-acid biosynthesis; glycine biosynthesis; glycine from L-serine: step 1/1. Its function is as follows. Catalyzes the reversible interconversion of serine and glycine with tetrahydrofolate (THF) serving as the one-carbon carrier. This reaction serves as the major source of one-carbon groups required for the biosynthesis of purines, thymidylate, methionine, and other important biomolecules. Also exhibits THF-independent aldolase activity toward beta-hydroxyamino acids, producing glycine and aldehydes, via a retro-aldol mechanism. The polypeptide is Serine hydroxymethyltransferase 2 (Cupriavidus pinatubonensis (strain JMP 134 / LMG 1197) (Cupriavidus necator (strain JMP 134))).